Reading from the N-terminus, the 139-residue chain is MATSFCSSISMQAPFSATTTRFCLNKQATIFNNEKTNNLSFSLRRLMPARLAVSCAVKQETVEKVSEIVKKQLSLTDDQKVTAGTKFTELGADSLDTVEIVMGLEEEFGITMAEERAKEIATVQQAAELIEELVQEKTA.

The transit peptide at 1-54 (MATSFCSSISMQAPFSATTTRFCLNKQATIFNNEKTNNLSFSLRRLMPARLAVS) directs the protein to the chloroplast. The Carrier domain occupies 59–134 (QETVEKVSEI…QAAELIEELV (76 aa)). Position 94 is an O-(pantetheine 4'-phosphoryl)serine (serine 94).

The protein belongs to the acyl carrier protein (ACP) family. Post-translationally, 4'-phosphopantetheine is transferred from CoA to a specific serine of apo-ACP by acpS. This modification is essential for activity because fatty acids are bound in thioester linkage to the sulfhydryl of the prosthetic group.

The protein localises to the plastid. It is found in the chloroplast. Functionally, carrier of the growing fatty acid chain in fatty acid biosynthesis. In Arabidopsis thaliana (Mouse-ear cress), this protein is Acyl carrier protein 5, chloroplastic (ACP5).